The primary structure comprises 337 residues: Ribose-phosphate pyrophosphokinase 4 (337 aa).

Ser2 is modified (N-acetylserine). The Mg(2+) site is built by Asp158 and His160. The segment at Gly241–Thr256 is binding of phosphoribosylpyrophosphate.

It belongs to the ribose-phosphate pyrophosphokinase family.

The enzyme catalyses D-ribose 5-phosphate + ATP = 5-phospho-alpha-D-ribose 1-diphosphate + AMP + H(+). The polypeptide is Ribose-phosphate pyrophosphokinase 4 (PRS4) (Arabidopsis thaliana (Mouse-ear cress)).